The primary structure comprises 101 residues: MRKKRLLSRISFSSLFLLCGTLLSACTGIQADLRNLIKETTGKDIDLSKAIKTKEGKKNIIASLKKSYEVNPRDTTKLLLDAWKQSFEEGKLGIPDFDLTM.

Residues 1–25 (MRKKRLLSRISFSSLFLLCGTLLSA) form the signal peptide. A lipid anchor (N-palmitoyl cysteine) is attached at C26. C26 carries S-diacylglycerol cysteine lipidation.

This sequence belongs to the MG439/MG440 family.

The protein resides in the cell membrane. This is an uncharacterized protein from Mycoplasma pneumoniae (strain ATCC 29342 / M129 / Subtype 1) (Mycoplasmoides pneumoniae).